Reading from the N-terminus, the 97-residue chain is Cell division topological specificity factor (97 aa).

It belongs to the MinE family.

Prevents the cell division inhibition by proteins MinC and MinD at internal division sites while permitting inhibition at polar sites. This ensures cell division at the proper site by restricting the formation of a division septum at the midpoint of the long axis of the cell. The polypeptide is Cell division topological specificity factor (Rhodospirillum centenum (strain ATCC 51521 / SW)).